The primary structure comprises 408 residues: Ribulose bisphosphate carboxylase/oxygenase activase, chloroplastic (408 aa).

Residues 1–32 (MQVTMKSSAVSGQRVGGARVATRSVRRAQLQV) constitute a chloroplast transit peptide. 138 to 145 (GGKGQGKT) serves as a coordination point for ATP.

Belongs to the RuBisCO activase family. In terms of assembly, monomer.

It localises to the plastid. It is found in the chloroplast stroma. In terms of biological role, activation of RuBisCO (ribulose-1,5-bisphosphate carboxylase/oxygenase; EC 4.1.1.39) involves the ATP-dependent carboxylation of the epsilon-amino group of lysine leading to a carbamate structure. This Chlamydomonas reinhardtii (Chlamydomonas smithii) protein is Ribulose bisphosphate carboxylase/oxygenase activase, chloroplastic.